We begin with the raw amino-acid sequence, 280 residues long: Elongation factor Ts (280 aa).

Residues 79-82 (TDFV) are involved in Mg(2+) ion dislocation from EF-Tu.

Belongs to the EF-Ts family.

It localises to the cytoplasm. Associates with the EF-Tu.GDP complex and induces the exchange of GDP to GTP. It remains bound to the aminoacyl-tRNA.EF-Tu.GTP complex up to the GTP hydrolysis stage on the ribosome. This chain is Elongation factor Ts, found in Vibrio cholerae serotype O1 (strain ATCC 39541 / Classical Ogawa 395 / O395).